The following is a 143-amino-acid chain: Putative nickel-responsive regulator (143 aa).

Residues histidine 82, histidine 97, histidine 99, and cysteine 105 each contribute to the Ni(2+) site.

The protein belongs to the transcriptional regulatory CopG/NikR family. It depends on Ni(2+) as a cofactor.

Transcriptional regulator. The protein is Putative nickel-responsive regulator of Helicobacter hepaticus (strain ATCC 51449 / 3B1).